The chain runs to 242 residues: uncharacterized protein (242 aa).

Residues 2–62 (EKAYKLLSVQ…VEKPSVIFED (61 aa)) form the S4 RNA-binding domain. Asp93 is a catalytic residue.

Belongs to the pseudouridine synthase RluA family.

The catalysed reaction is a uridine in RNA = a pseudouridine in RNA. This is an uncharacterized protein from Helicobacter pylori (strain J99 / ATCC 700824) (Campylobacter pylori J99).